The sequence spans 148 residues: Sperm-specific protein PHI-2B (148 aa).

Residues 1-35 (PSPSRRSRSRSRSRSKSPKRSPAKKARKTPKKRRA) show a composition bias toward basic residues. Disordered stretches follow at residues 1–44 (PSPS…KPST) and 97–148 (GVLV…KSNN). In terms of domain architecture, H15 spans 40-119 (KKPSTLSMIV…GATGSFRVGK (80 aa)). A compositionally biased stretch (basic residues) spans 124–148 (PKKKAKKAKSPKKKSSKKSSNKSNN).

It belongs to the histone H1/H5 family. Sperm.

It is found in the nucleus. Its subcellular location is the chromosome. Its function is as follows. Linker histones are implicated in chromatin remodeling and/or transcriptional regulation during spermiogenesis, the process of spermatid maturation into spermatozoa. The chain is Sperm-specific protein PHI-2B from Mytilus californianus (California mussel).